A 361-amino-acid chain; its full sequence is uncharacterized protein (361 aa).

A compositionally biased stretch (basic residues) spans 1–10 (MRRYLKKAKP). 2 disordered regions span residues 1 to 82 (MRRY…SSFH) and 94 to 147 (ALSH…VNTS). Basic and acidic residues-rich tracts occupy residues 44-57 (KEKN…KYEN) and 120-134 (FTKK…ESEL). Residues 135–147 (QTRSSPPLPVNTS) are compositionally biased toward polar residues. A coiled-coil region spans residues 295–349 (NILTMDEQIQRLKEAIASEKLQQEERSQIIKSLMEEELEINEQEEKIKHSFIDLD).

Its subcellular location is the cytoplasm. It localises to the nucleus. This is an uncharacterized protein from Schizosaccharomyces pombe (strain 972 / ATCC 24843) (Fission yeast).